A 379-amino-acid chain; its full sequence is 4-hydroxy-3-methylbut-2-enyl diphosphate reductase (379 aa).

Cys39 contributes to the [4Fe-4S] cluster binding site. His69 serves as a coordination point for (2E)-4-hydroxy-3-methylbut-2-enyl diphosphate. Position 69 (His69) interacts with dimethylallyl diphosphate. Position 69 (His69) interacts with isopentenyl diphosphate. Residue Cys130 participates in [4Fe-4S] cluster binding. His158 contacts (2E)-4-hydroxy-3-methylbut-2-enyl diphosphate. Position 158 (His158) interacts with dimethylallyl diphosphate. His158 contributes to the isopentenyl diphosphate binding site. Residue Glu160 is the Proton donor of the active site. (2E)-4-hydroxy-3-methylbut-2-enyl diphosphate is bound at residue Thr223. Cys261 is a [4Fe-4S] cluster binding site. The (2E)-4-hydroxy-3-methylbut-2-enyl diphosphate site is built by Ser290, Ser291, Asn292, and Ser352. Dimethylallyl diphosphate contacts are provided by Ser290, Ser291, Asn292, and Ser352. Positions 290, 291, 292, and 352 each coordinate isopentenyl diphosphate.

It belongs to the IspH family. It depends on [4Fe-4S] cluster as a cofactor.

The enzyme catalyses isopentenyl diphosphate + 2 oxidized [2Fe-2S]-[ferredoxin] + H2O = (2E)-4-hydroxy-3-methylbut-2-enyl diphosphate + 2 reduced [2Fe-2S]-[ferredoxin] + 2 H(+). It carries out the reaction dimethylallyl diphosphate + 2 oxidized [2Fe-2S]-[ferredoxin] + H2O = (2E)-4-hydroxy-3-methylbut-2-enyl diphosphate + 2 reduced [2Fe-2S]-[ferredoxin] + 2 H(+). It participates in isoprenoid biosynthesis; dimethylallyl diphosphate biosynthesis; dimethylallyl diphosphate from (2E)-4-hydroxy-3-methylbutenyl diphosphate: step 1/1. Its pathway is isoprenoid biosynthesis; isopentenyl diphosphate biosynthesis via DXP pathway; isopentenyl diphosphate from 1-deoxy-D-xylulose 5-phosphate: step 6/6. Catalyzes the conversion of 1-hydroxy-2-methyl-2-(E)-butenyl 4-diphosphate (HMBPP) into a mixture of isopentenyl diphosphate (IPP) and dimethylallyl diphosphate (DMAPP). Acts in the terminal step of the DOXP/MEP pathway for isoprenoid precursor biosynthesis. The polypeptide is 4-hydroxy-3-methylbut-2-enyl diphosphate reductase (Synechocystis sp. (strain ATCC 27184 / PCC 6803 / Kazusa)).